Consider the following 154-residue polypeptide: Large ribosomal subunit protein uL11 (154 aa).

The protein belongs to the universal ribosomal protein uL11 family. As to quaternary structure, part of the ribosomal stalk of the 50S ribosomal subunit. Interacts with L10 and the large rRNA to form the base of the stalk. L10 forms an elongated spine to which L12 dimers bind in a sequential fashion forming a multimeric L10(L12)X complex. Post-translationally, one or more lysine residues are methylated.

Forms part of the ribosomal stalk which helps the ribosome interact with GTP-bound translation factors. This Leuconostoc mesenteroides subsp. mesenteroides (strain ATCC 8293 / DSM 20343 / BCRC 11652 / CCM 1803 / JCM 6124 / NCDO 523 / NBRC 100496 / NCIMB 8023 / NCTC 12954 / NRRL B-1118 / 37Y) protein is Large ribosomal subunit protein uL11.